We begin with the raw amino-acid sequence, 438 residues long: Methylenetetrahydrofolate--tRNA-(uracil-5-)-methyltransferase TrmFO (438 aa).

9–14 (GGGLAG) is a binding site for FAD.

The protein belongs to the MnmG family. TrmFO subfamily. Requires FAD as cofactor.

The protein resides in the cytoplasm. The catalysed reaction is uridine(54) in tRNA + (6R)-5,10-methylene-5,6,7,8-tetrahydrofolate + NADH + H(+) = 5-methyluridine(54) in tRNA + (6S)-5,6,7,8-tetrahydrofolate + NAD(+). The enzyme catalyses uridine(54) in tRNA + (6R)-5,10-methylene-5,6,7,8-tetrahydrofolate + NADPH + H(+) = 5-methyluridine(54) in tRNA + (6S)-5,6,7,8-tetrahydrofolate + NADP(+). In terms of biological role, catalyzes the folate-dependent formation of 5-methyl-uridine at position 54 (M-5-U54) in all tRNAs. The sequence is that of Methylenetetrahydrofolate--tRNA-(uracil-5-)-methyltransferase TrmFO from Lactobacillus gasseri (strain ATCC 33323 / DSM 20243 / BCRC 14619 / CIP 102991 / JCM 1131 / KCTC 3163 / NCIMB 11718 / NCTC 13722 / AM63).